A 431-amino-acid chain; its full sequence is Glutamyl-tRNA(Gln) amidotransferase subunit A (431 aa).

Catalysis depends on charge relay system residues Lys55 and Ser130. Ser154 serves as the catalytic Acyl-ester intermediate.

Belongs to the amidase family. GatA subfamily. In terms of assembly, heterotrimer of A, B and C subunits.

It carries out the reaction L-glutamyl-tRNA(Gln) + L-glutamine + ATP + H2O = L-glutaminyl-tRNA(Gln) + L-glutamate + ADP + phosphate + H(+). Allows the formation of correctly charged Gln-tRNA(Gln) through the transamidation of misacylated Glu-tRNA(Gln) in organisms which lack glutaminyl-tRNA synthetase. The reaction takes place in the presence of glutamine and ATP through an activated gamma-phospho-Glu-tRNA(Gln). The sequence is that of Glutamyl-tRNA(Gln) amidotransferase subunit A from Methanococcus maripaludis (strain DSM 14266 / JCM 13030 / NBRC 101832 / S2 / LL).